We begin with the raw amino-acid sequence, 131 residues long: Profilin-3 (131 aa).

Belongs to the profilin family. As to quaternary structure, occurs in many kinds of cells as a complex with monomeric actin in a 1:1 ratio.

The protein resides in the cytoplasm. Its subcellular location is the cytoskeleton. Functionally, binds to actin and affects the structure of the cytoskeleton. At high concentrations, profilin prevents the polymerization of actin, whereas it enhances it at low concentrations. By binding to PIP2, it inhibits the formation of IP3 and DG. This is Profilin-3 (PRO3) from Triticum aestivum (Wheat).